The sequence spans 142 residues: Large ribosomal subunit protein uL13 (142 aa).

It belongs to the universal ribosomal protein uL13 family. In terms of assembly, part of the 50S ribosomal subunit.

In terms of biological role, this protein is one of the early assembly proteins of the 50S ribosomal subunit, although it is not seen to bind rRNA by itself. It is important during the early stages of 50S assembly. The polypeptide is Large ribosomal subunit protein uL13 (Pseudomonas syringae pv. syringae (strain B728a)).